The sequence spans 104 residues: UPF0473 protein SH1304 (104 aa).

The protein belongs to the UPF0473 family.

The chain is UPF0473 protein SH1304 from Staphylococcus haemolyticus (strain JCSC1435).